A 476-amino-acid polypeptide reads, in one-letter code: MKVRVRLAPSPTGTLHLGTARTALFNWLFAKKEGGTFLLRIEDTDIERSREEYINDIYDGLKWLGINWDESPTIQSERVNEHKQIIKTLVDKGFAYKCYASEAELDEMRETQKRNGLAPKYDNRHRNLTPEQESEFIKLGRDPVIRFKISDEKLISWNDLIRGKMTWSGKDLGGDMVIARRAPGNSIGDPLYNLVVVADDSAMKISHVIRGEDHLANTAKQILLYEALDLNIPVFAHTPLILNSEGKKLSKRDGVTSISEFKKMGYTSEAMANYMTLLGWSVPEGINERFNISEVSEIFSFKKVNKASAKFDWDKLNWLNSQVIHEMSAETLLENLEPLFKENGWHLPSHEWGINLVGLIGPSMVLINDGVDQAKPFFEEQELSDDGKKQLEIKEAAVILKFILEKLADSDAASFSKEKALDLIDQATKSCKVKKGVVMKSLRAALFGTLNGPDLIQSWVLLSRFSKDRARISRLI.

A 'HIGH' region motif is present at residues 9 to 19 (PSPTGTLHLGT). The 'KMSKS' region motif lies at 248 to 252 (KLSKR). Lys251 serves as a coordination point for ATP.

Belongs to the class-I aminoacyl-tRNA synthetase family. Glutamate--tRNA ligase type 1 subfamily. Monomer.

The protein resides in the cytoplasm. The enzyme catalyses tRNA(Glu) + L-glutamate + ATP = L-glutamyl-tRNA(Glu) + AMP + diphosphate. Catalyzes the attachment of glutamate to tRNA(Glu) in a two-step reaction: glutamate is first activated by ATP to form Glu-AMP and then transferred to the acceptor end of tRNA(Glu). The sequence is that of Glutamate--tRNA ligase from Prochlorococcus marinus (strain NATL1A).